The chain runs to 581 residues: Frizzled-8 (581 aa).

An N-terminal signal peptide occupies residues 1–23; that stretch reads MESLSLSLLLLVSWLQGSQCAAA. One can recognise an FZ domain in the interval 24–144; sequence KELSCQEITV…GNPDTLCMDY (121 aa). The Extracellular portion of the chain corresponds to 24–239; that stretch reads KELSCQEITV…PEERTFTEFW (216 aa). 5 cysteine pairs are disulfide-bonded: C28/C89, C36/C82, C73/C111, C100/C141, and C104/C128. N42 carries N-linked (GlcNAc...) asparagine glycosylation. 64–71 serves as a coordination point for hexadecanoate; sequence QFWPLVVI. Residues 88-93 are wnt-binding; it reads ICLEDY. The segment at 140 to 146 is wnt-binding; the sequence is LCMDYYN. N-linked (GlcNAc...) asparagine glycosylation occurs at N146. The segment at 151 to 189 is disordered; it reads TTAAPSHPEPPKPPARSVPKGRTRVEPPRSRSRATGCES. A compositionally biased stretch (pro residues) spans 157-166; it reads HPEPPKPPAR. A helical membrane pass occupies residues 240 to 260; that stretch reads IGLWSVLCFASTFATVSTFLI. Over 261-271 the chain is Cytoplasmic; that stretch reads DMERFKYPERP. Residues 272–292 form a helical membrane-spanning segment; it reads IIFLSACYLLVSTGYLIRLIA. The Extracellular segment spans residues 293-320; it reads GHEKVACSRGELDLEHIIHYETTGPALC. A helical membrane pass occupies residues 321–341; it reads TLVFLLIYFFGMASSIWWVIL. The Cytoplasmic portion of the chain corresponds to 342 to 377; it reads SLTWFLAAGMKWGNEAIAGYSQYFHLAAWLVPSIKS. The chain crosses the membrane as a helical span at residues 378–398; it reads IAVLALSSVDGDPVAGICFVG. Residues 399–407 are Extracellular-facing; sequence NQNLDNLRG. A helical membrane pass occupies residues 408–428; that stretch reads FVLAPLVIYLFIGSMFLLAGF. Residues 429–454 lie on the Cytoplasmic side of the membrane; that stretch reads VSLFRIRSVIKQGGTKTDKLEKLMIR. Residues 455–475 traverse the membrane as a helical segment; the sequence is IGIFSVLYTVPATIVVACFFY. The Extracellular portion of the chain corresponds to 476-505; it reads EQHNRQGWEVAHNCNSCQPEMAQPHRPDYA. A helical membrane pass occupies residues 506-526; it reads VFMLKYFMCLVVGITSGVWIW. Residues 527–581 are Cytoplasmic-facing; the sequence is SGKTLESWRAFCTRCCWGSKATGGSMYSDVSTGLTWRSGTGSSVSCPKQMPLSQV. The Lys-Thr-X-X-X-Trp motif, mediates interaction with the PDZ domain of Dvl family members signature appears at 529–534; the sequence is KTLESW. The short motif at 579–581 is the PDZ-binding element; sequence SQV.

Belongs to the G-protein coupled receptor Fz/Smo family. Interacts with lypd6 and the interaction is strongly enhanced by wnt3a.

It localises to the membrane. Its subcellular location is the cell membrane. Its function is as follows. Receptor for Wnt proteins. Most of frizzled receptors are coupled to the beta-catenin canonical signaling pathway, which leads to the activation of disheveled proteins, inhibition of GSK-3 kinase, nuclear accumulation of beta-catenin and activation of Wnt target genes. A second signaling pathway involving PKC and calcium fluxes has been seen for some family members, but it is not yet clear if it represents a distinct pathway or if it can be integrated in the canonical pathway, as PKC seems to be required for Wnt-mediated inactivation of GSK-3 kinase. Both pathways seem to involve interactions with G-proteins. May be involved in transduction and intercellular transmission of polarity information during tissue morphogenesis and/or in differentiated tissues. Activation by Wnt8, Wnt5A or Wnt3A induces expression of beta-catenin target genes. Displays an axis-inducing activity. This Xenopus laevis (African clawed frog) protein is Frizzled-8 (fzd8).